The following is a 365-amino-acid chain: Peptide chain release factor 2 (365 aa).

Gln-252 is modified (N5-methylglutamine).

The protein belongs to the prokaryotic/mitochondrial release factor family. Methylated by PrmC. Methylation increases the termination efficiency of RF2.

Its subcellular location is the cytoplasm. Its function is as follows. Peptide chain release factor 2 directs the termination of translation in response to the peptide chain termination codons UGA and UAA. The chain is Peptide chain release factor 2 from Tolumonas auensis (strain DSM 9187 / NBRC 110442 / TA 4).